We begin with the raw amino-acid sequence, 84 residues long: Acyl carrier protein homolog (84 aa).

The 76-residue stretch at 4–79 (HEILLKIKEI…DLVLEVKNLL (76 aa)) folds into the Carrier domain. An O-(pantetheine 4'-phosphoryl)serine modification is found at Ser39.

4'-phosphopantetheine is transferred from CoA to a specific serine of the apo-ACP-like protein.

It participates in lipid metabolism; fatty acid biosynthesis. Functionally, carrier of the growing fatty acid chain in fatty acid biosynthesis. This Mycoplasma genitalium (strain ATCC 33530 / DSM 19775 / NCTC 10195 / G37) (Mycoplasmoides genitalium) protein is Acyl carrier protein homolog.